The following is a 419-amino-acid chain: Probable G-protein coupled receptor 63 (419 aa).

The Extracellular segment spans residues 1–81 (MVFSAVLTAF…AFKSLNLPLQ (81 aa)). N-linked (GlcNAc...) asparagine glycans are attached at residues Asn16, Asn28, and Asn62. Residues 82–104 (ITLSAIMIFILFVSFLGNLVVCL) form a helical membrane-spanning segment. The Cytoplasmic portion of the chain corresponds to 105–115 (MVYQKAAMRSA). A helical membrane pass occupies residues 116–138 (INILLASLAFADMLLAVLNMPFA). Residues 139–157 (LVTILTTRWIFGKFFCRVS) lie on the Extracellular side of the membrane. A helical transmembrane segment spans residues 158-177 (AMFFWLFVIEGVAILLIISI). Residues 178 to 196 (DRFLIIVQRQDKLNPYRAK) are Cytoplasmic-facing. The helical transmembrane segment at 197–216 (VLIAVSWATSFCVAFPLAVG) threads the bilayer. Residues 217-240 (NPDLQIPSRAPQCVFGYTTNPGYQ) are Extracellular-facing. Residues 241–263 (AYVILISLISFFIPFLVILYSFM) form a helical membrane-spanning segment. Topologically, residues 264-315 (GILNTLRHNALRIHSYPEGICLSQASKLGLMSLQRPFQMSIDMGFKTRAFTT) are cytoplasmic. A helical transmembrane segment spans residues 316–338 (ILILFAVFIVCWAPFTTYSLVAT). Over 339-352 (FSKHFYYQHNFFEI) the chain is Extracellular. A helical transmembrane segment spans residues 353–375 (STWLLWLCYLKSALNPLIYYWRI). The Cytoplasmic segment spans residues 376–419 (KKFHDACLDMMPKSFKFLPQLPGHTKRRIRPSAVYVCGEHRTVV).

It belongs to the G-protein coupled receptor 1 family. As to expression, expressed in brain; detected in the frontal cortex, with lower levels in the thalamus, caudate, hypothalamus and midbrain.

The protein resides in the cell membrane. Its function is as follows. Orphan receptor. May play a role in brain function. This is Probable G-protein coupled receptor 63 (GPR63) from Homo sapiens (Human).